A 1210-amino-acid polypeptide reads, in one-letter code: Inner capsid protein VP3 (1210 aa).

The disordered stretch occupies residues 1–28 (MPRTSRNVRATEVATTAIPPSNAATDTT). The segment at 113–136 (LRCQQCGAKFSSMTQLAEHVRTEH) adopts a C2H2-type zinc-finger fold. The segment at 294 to 319 (PHAGPQVRSVQSQDQQVYSVDSGPDP) is disordered. Residues 299–315 (QVRSVQSQDQQVYSVDS) are compositionally biased toward low complexity.

The protein belongs to the turreted BTV-fold inner capsid family. Homodecamer; each decamer is made up of two conformers of VP2, called VP2A and VP2B. 12 homodecamers assemble to form an icosahedral capsid. Interacts with VP6.

Its subcellular location is the virion. Functionally, inner capsid protein that self-assembles to form an icosahedral capsid with a T=2 symmetry, which consists of 120 copies of VP2, with channels at each of its five-fold vertices. This capsid constitutes the innermost concentric layer of the viral mature particle. The chain is Inner capsid protein VP3 (S3) from Aquareovirus A (isolate Chum salmon/Japan/CSRV/1981) (AQRV-A).